Here is a 254-residue protein sequence, read N- to C-terminus: GTP cyclohydrolase III (254 aa).

Belongs to the archaeal-type GTP cyclohydrolase family.

It carries out the reaction GTP + 3 H2O = 2-amino-5-formylamino-6-(5-phospho-D-ribosylamino)pyrimidin-4(3H)-one + 2 phosphate + 2 H(+). Functionally, catalyzes the formation of 2-amino-5-formylamino-6-ribofuranosylamino-4(3H)-pyrimidinone ribonucleotide monophosphate and inorganic phosphate from GTP. Also has an independent pyrophosphate phosphohydrolase activity. This chain is GTP cyclohydrolase III, found in Methanobrevibacter smithii (strain ATCC 35061 / DSM 861 / OCM 144 / PS).